A 119-amino-acid polypeptide reads, in one-letter code: Large ribosomal subunit protein uL18 (119 aa).

It belongs to the universal ribosomal protein uL18 family. Part of the 50S ribosomal subunit; part of the 5S rRNA/L5/L18/L25 subcomplex. Contacts the 5S and 23S rRNAs.

Functionally, this is one of the proteins that bind and probably mediate the attachment of the 5S RNA into the large ribosomal subunit, where it forms part of the central protuberance. The sequence is that of Large ribosomal subunit protein uL18 from Xanthomonas oryzae pv. oryzae (strain PXO99A).